The primary structure comprises 481 residues: Glycogen synthase (481 aa).

An ADP-alpha-D-glucose-binding site is contributed by Lys15.

Belongs to the glycosyltransferase 1 family. Bacterial/plant glycogen synthase subfamily.

It carries out the reaction [(1-&gt;4)-alpha-D-glucosyl](n) + ADP-alpha-D-glucose = [(1-&gt;4)-alpha-D-glucosyl](n+1) + ADP + H(+). It participates in glycan biosynthesis; glycogen biosynthesis. Its function is as follows. Synthesizes alpha-1,4-glucan chains using ADP-glucose. The polypeptide is Glycogen synthase (Thermosipho melanesiensis (strain DSM 12029 / CIP 104789 / BI429)).